The primary structure comprises 305 residues: Dihydroorotate dehydrogenase B (NAD(+)), catalytic subunit (305 aa).

Residues Ser-23 and 47-48 contribute to the FMN site; that span reads KG. Residues Lys-47 and 71–75 contribute to the substrate site; that span reads NAIGL. FMN-binding residues include Asn-101 and Asn-129. Asn-129 lines the substrate pocket. Cys-132 serves as the catalytic Nucleophile. FMN-binding residues include Lys-167 and Ile-193. 194–195 contacts substrate; sequence NT. Residues Gly-219, 245 to 246, and 267 to 268 each bind FMN; these read GG and GT.

This sequence belongs to the dihydroorotate dehydrogenase family. Type 1 subfamily. In terms of assembly, heterotetramer of 2 PyrK and 2 PyrD type B subunits. The cofactor is FMN.

It is found in the cytoplasm. It catalyses the reaction (S)-dihydroorotate + NAD(+) = orotate + NADH + H(+). Its pathway is pyrimidine metabolism; UMP biosynthesis via de novo pathway; orotate from (S)-dihydroorotate (NAD(+) route): step 1/1. Its function is as follows. Catalyzes the conversion of dihydroorotate to orotate with NAD(+) as electron acceptor. The polypeptide is Dihydroorotate dehydrogenase B (NAD(+)), catalytic subunit (pyrD) (Geotalea uraniireducens (strain Rf4) (Geobacter uraniireducens)).